The sequence spans 111 residues: Translation initiation factor 1A 1 (111 aa).

The interval 1-26 is disordered; the sequence is MTLADLKKPTSRATPSTEETFTRVRT. One can recognise an S1-like domain in the interval 22-96; sequence TRVRTPRREN…EKADVIWKYT (75 aa).

It belongs to the eIF-1A family.

Its function is as follows. Seems to be required for maximal rate of protein biosynthesis. Enhances ribosome dissociation into subunits and stabilizes the binding of the initiator Met-tRNA(I) to 40 S ribosomal subunits. The polypeptide is Translation initiation factor 1A 1 (eIF1A1) (Methanosarcina acetivorans (strain ATCC 35395 / DSM 2834 / JCM 12185 / C2A)).